The sequence spans 641 residues: Uromodulin (641 aa).

Positions 1-24 (MGQPPLTWMLMVVVASWFITTAAT) are cleaved as a signal peptide. Asn-25 is a glycosylation site (N-linked (GlcNAc...) asparagine). One can recognise an EGF-like 1 domain in the interval 28-64 (EARWCSECHSNATCTEDEAVTTCTCQEGFTGDGLTCV). Intrachain disulfides connect Cys-32-Cys-41, Cys-35-Cys-50, Cys-52-Cys-63, Cys-69-Cys-83, Cys-77-Cys-92, Cys-94-Cys-106, Cys-112-Cys-126, Cys-120-Cys-135, Cys-137-Cys-148, Cys-150-Cys-161, Cys-155-Cys-170, Cys-174-Cys-267, Cys-195-Cys-282, Cys-217-Cys-255, Cys-223-Cys-287, Cys-248-Cys-256, Cys-297-Cys-306, Cys-300-Cys-315, Cys-317-Cys-347, Cys-335-Cys-425, and Cys-366-Cys-389. One can recognise an EGF-like 2; calcium-binding domain in the interval 65–107 (DLDECAIPGAHNCSANSSCVNTPGSFSCVCPEGFRLSPGLGCT). An N-linked (GlcNAc...) asparagine glycan is attached at Asn-76. One can recognise an EGF-like 3; calcium-binding domain in the interval 108–149 (DVDECAEPGLSHCHALATCVNVVGNYLCVCPAGYRGDGWHCE). Positions 150–171 (CSPGSCGPGLDCVPEGDALVCA) are beta hairpin. The tract at residues 172–291 (DPCQAHRTLD…CHLAYCTDPS (120 aa)) is D10C. Residue Asn-232 is glycosylated (N-linked (GlcNAc...) asparagine). Asn-275 is a glycosylation site (N-linked (GlcNAc...) asparagine). The 32-residue stretch at 292–323 (SVEGTCEECSIDEDCKSDNGRWHCQCKQDFNI) folds into the EGF-like 4 domain. N-linked (GlcNAc...) asparagine glycosylation occurs at Asn-322. The segment at 334 to 429 (ECGANDMKVS…KINFACSYPL (96 aa)) is ZP-N. The ZP domain maps to 334-589 (ECGANDMKVS…PTCSGTRFRS (256 aa)). The segment at 430–453 (DMKVSLKTSLQPVVSALNITVGGT) is flexible ZP-N/ZP-C linker; important for secretion and polymerization into filaments. Asn-447 is a glycosylation site (N-linked (GlcNAc...) asparagine). An internal hydrophobic patch (IHP) region spans residues 454 to 464 (GMFTVRMALFQ). The segment at 454–589 (GMFTVRMALF…PTCSGTRFRS (136 aa)) is ZP-C. 3 cysteine pairs are disulfide-bonded: Cys-506/Cys-566, Cys-527/Cys-582, and Cys-571/Cys-578. The essential for cleavage by HPN stretch occupies residues 586–589 (RFRS). The tract at residues 598 to 606 (VLNLGPITR) is external hydrophobic patch (EHP); regulates polymerization into filaments. A lipid anchor (GPI-anchor amidated serine) is attached at Ser-614. The propeptide at 615 to 641 (RAAFSSLGLLKVWLPLLLSATLTLTFQ) is removed in mature form.

As to quaternary structure, homodimer that then polymerizes into long filaments. The filaments can additionally assemble laterally to form a sheet. The filaments consist of a zigzag-shaped backbone with laterally protruding arms which interact with bacterial adhesin fimH. Two fimH molecules can bind to a single UMOD monomer. N-glycosylated. Post-translationally, proteolytically cleaved at a conserved C-terminal proteolytic cleavage site to generate the secreted form found in urine. This cleavage is catalyzed by HPN.

It is found in the apical cell membrane. The protein resides in the basolateral cell membrane. It localises to the cell projection. Its subcellular location is the cilium membrane. The protein localises to the secreted. Its function is as follows. Functions in biogenesis and organization of the apical membrane of epithelial cells of the thick ascending limb of Henle's loop (TALH), where it promotes formation of complex filamentous gel-like structure that may play a role in the water barrier permeability. May serve as a receptor for binding and endocytosis of cytokines (IL-1, IL-2) and TNF. Facilitates neutrophil migration across renal epithelia. In the urine, may contribute to colloid osmotic pressure, retards passage of positively charged electrolytes, and inhibits formation of liquid containing supersaturated salts and subsequent formation of salt crystals. Protects against urinary tract infections by binding to type 1 fimbriated E.coli. Binds to bacterial adhesin fimH which mediates the stable formation of bacterial aggregates, prevents the binding of E.coli to uroplakins UPK1A and UPK1B which act as urothelial receptors for type I fimbriae, and allows for pathogen clearance through micturation. Also promotes aggregation of other bacteria including K.pneumoniae, P.aeruginosa and S.mitis and so may also protect against other uropathogens. The chain is Uromodulin (UMOD) from Pongo abelii (Sumatran orangutan).